The following is a 235-amino-acid chain: 5'-methylthioadenosine/S-adenosylhomocysteine nucleosidase (235 aa).

Glu12 serves as the catalytic Proton acceptor. Residues Gly78, Ile152, and 173-174 (ME) each bind substrate. Catalysis depends on Asp197, which acts as the Proton donor.

This sequence belongs to the PNP/UDP phosphorylase family. MtnN subfamily. As to quaternary structure, homodimer.

It carries out the reaction S-adenosyl-L-homocysteine + H2O = S-(5-deoxy-D-ribos-5-yl)-L-homocysteine + adenine. The enzyme catalyses S-methyl-5'-thioadenosine + H2O = 5-(methylsulfanyl)-D-ribose + adenine. It catalyses the reaction 5'-deoxyadenosine + H2O = 5-deoxy-D-ribose + adenine. Its pathway is amino-acid biosynthesis; L-methionine biosynthesis via salvage pathway; S-methyl-5-thio-alpha-D-ribose 1-phosphate from S-methyl-5'-thioadenosine (hydrolase route): step 1/2. Its function is as follows. Catalyzes the irreversible cleavage of the glycosidic bond in both 5'-methylthioadenosine (MTA) and S-adenosylhomocysteine (SAH/AdoHcy) to adenine and the corresponding thioribose, 5'-methylthioribose and S-ribosylhomocysteine, respectively. Also cleaves 5'-deoxyadenosine, a toxic by-product of radical S-adenosylmethionine (SAM) enzymes, into 5-deoxyribose and adenine. Thus, is required for in vivo function of the radical SAM enzymes biotin synthase and lipoic acid synthase, that are inhibited by 5'-deoxyadenosine accumulation. The sequence is that of 5'-methylthioadenosine/S-adenosylhomocysteine nucleosidase from Buchnera aphidicola subsp. Schizaphis graminum (strain Sg).